The chain runs to 122 residues: Large ribosomal subunit protein uL14 (122 aa).

The protein belongs to the universal ribosomal protein uL14 family. In terms of assembly, part of the 50S ribosomal subunit. Forms a cluster with proteins L3 and L19. In the 70S ribosome, L14 and L19 interact and together make contacts with the 16S rRNA in bridges B5 and B8.

In terms of biological role, binds to 23S rRNA. Forms part of two intersubunit bridges in the 70S ribosome. This is Large ribosomal subunit protein uL14 from Sphingopyxis alaskensis (strain DSM 13593 / LMG 18877 / RB2256) (Sphingomonas alaskensis).